A 63-amino-acid chain; its full sequence is Disintegrin schistatin-like subunit B (63 aa).

Positions 1 to 63 (NSVNPCCDPQ…TPDCPRNRYN (63 aa)) constitute a Disintegrin domain. Disulfide bonds link Cys6–Cys29, Cys20–Cys26, Cys25–Cys50, and Cys38–Cys57. The Cell attachment site signature appears at 42-44 (RGD).

It belongs to the disintegrin family. Dimeric disintegrin subfamily. As to quaternary structure, heterodimer with subunit A; disulfide-linked. As to expression, expressed by the venom gland.

Its subcellular location is the secreted. Functionally, may bind to both alpha-IIb/beta-3 (ITGA2B/ITGB3) and alpha-V/beta-3 (ITGAV/ITGB3) integrins, and may inhibit platelet aggregation. The polypeptide is Disintegrin schistatin-like subunit B (Echis carinatus (Saw-scaled viper)).